Here is a 329-residue protein sequence, read N- to C-terminus: Peroxidase 73 (329 aa).

Positions 1–25 are cleaved as a signal peptide; it reads MARFSLVVVVTLSLAISMFPDTTTA. Cystine bridges form between Cys36–Cys119, Cys69–Cys74, Cys125–Cys325, and Cys204–Cys236. Residue His67 is the Proton acceptor of the active site. Residues Asp68, Val71, Gly73, Asp75, and Ser77 each contribute to the Ca(2+) site. Pro167 provides a ligand contact to substrate. Residue His197 participates in heme b binding. Residue Thr198 participates in Ca(2+) binding. A glycan (N-linked (GlcNAc...) asparagine) is linked at Asn215. Residues Asp249, Thr252, and Asp257 each coordinate Ca(2+).

This sequence belongs to the peroxidase family. Classical plant (class III) peroxidase subfamily. Requires heme b as cofactor. Ca(2+) serves as cofactor. In terms of tissue distribution, expressed in the whole plant, with the highest expression in roots.

It is found in the secreted. It catalyses the reaction 2 a phenolic donor + H2O2 = 2 a phenolic radical donor + 2 H2O. Removal of H(2)O(2), oxidation of toxic reductants, biosynthesis and degradation of lignin, suberization, auxin catabolism, response to environmental stresses such as wounding, pathogen attack and oxidative stress. These functions might be dependent on each isozyme/isoform in each plant tissue. The chain is Peroxidase 73 (PER73) from Arabidopsis thaliana (Mouse-ear cress).